A 394-amino-acid polypeptide reads, in one-letter code: Xylose isomerase (394 aa).

Active-site residues include H54 and D57. Mg(2+) is bound by residues E181, E217, H220, D245, D255, D257, and D292.

This sequence belongs to the xylose isomerase family. Homotetramer. Requires Mg(2+) as cofactor.

The protein resides in the cytoplasm. It carries out the reaction alpha-D-xylose = alpha-D-xylulofuranose. The sequence is that of Xylose isomerase (xylA) from Actinoplanes missouriensis (strain ATCC 14538 / DSM 43046 / CBS 188.64 / JCM 3121 / NBRC 102363 / NCIMB 12654 / NRRL B-3342 / UNCC 431).